We begin with the raw amino-acid sequence, 342 residues long: Galactose mutarotase (342 aa).

Beta-D-galactose-binding positions include 81–82 and H107; that span reads NR. Phosphoserine is present on S124. The active-site Proton donor is the H176. Beta-D-galactose contacts are provided by residues 176 to 178, D243, Q279, and E307; that span reads HSY. Catalysis depends on E307, which acts as the Proton acceptor.

The protein belongs to the aldose epimerase family. In terms of assembly, monomer.

The protein resides in the cytoplasm. The enzyme catalyses alpha-D-galactose = beta-D-galactose. The catalysed reaction is alpha-D-glucose = beta-D-glucose. It functions in the pathway carbohydrate metabolism; hexose metabolism. Its pathway is carbohydrate metabolism; galactose metabolism. In terms of biological role, mutarotase that catalyzes the interconversion of beta-D-galactose and alpha-D-galactose during galactose metabolism. Beta-D-galactose is metabolized in the liver into glucose 1-phosphate, the primary metabolic fuel, by the action of four enzymes that constitute the Leloir pathway: GALM, GALK1 (galactokinase), GALT (galactose-1-phosphate uridylyltransferase) and GALE (UDP-galactose-4'-epimerase). Involved in the maintenance of the equilibrium between the beta- and alpha-anomers of galactose, therefore ensuring a sufficient supply of the alpha-anomer for GALK1. Also active on D-glucose although shows a preference for galactose over glucose. This chain is Galactose mutarotase (GALM), found in Bos taurus (Bovine).